Here is a 66-residue protein sequence, read N- to C-terminus: Large ribosomal subunit protein bL28 (66 aa).

The tract at residues 1 to 26 (MAKDAITGARTRFGNQRSHALNSSRR) is disordered. Positions 13–25 (FGNQRSHALNSSR) are enriched in polar residues.

It belongs to the bacterial ribosomal protein bL28 family.

The sequence is that of Large ribosomal subunit protein bL28 from Leuconostoc mesenteroides subsp. mesenteroides (strain ATCC 8293 / DSM 20343 / BCRC 11652 / CCM 1803 / JCM 6124 / NCDO 523 / NBRC 100496 / NCIMB 8023 / NCTC 12954 / NRRL B-1118 / 37Y).